Consider the following 64-residue polypeptide: U2-aranetoxin-Av1a (64 aa).

As to expression, expressed in fat body, but not in cephalothorax, silk gland, midgut.

Insecticidal toxin. This Araneus ventricosus (Orbweaver spider) protein is U2-aranetoxin-Av1a.